Here is a 573-residue protein sequence, read N- to C-terminus: Glutamate--tRNA ligase (573 aa).

The 'HIGH' region signature appears at 107–117; sequence PNPDGAFHLGN.

This sequence belongs to the class-I aminoacyl-tRNA synthetase family. Glutamate--tRNA ligase type 2 subfamily.

The protein localises to the cytoplasm. The enzyme catalyses tRNA(Glu) + L-glutamate + ATP = L-glutamyl-tRNA(Glu) + AMP + diphosphate. Its function is as follows. Catalyzes the attachment of glutamate to tRNA(Glu) in a two-step reaction: glutamate is first activated by ATP to form Glu-AMP and then transferred to the acceptor end of tRNA(Glu). The polypeptide is Glutamate--tRNA ligase (Thermococcus kodakarensis (strain ATCC BAA-918 / JCM 12380 / KOD1) (Pyrococcus kodakaraensis (strain KOD1))).